Consider the following 215-residue polypeptide: Octanoyltransferase (215 aa).

Positions 31 to 206 (PDSQDEIWLV…QLVKHLDYAE (176 aa)) constitute a BPL/LPL catalytic domain. Residues 70-77 (RGGQVTYH), 137-139 (SLG), and 150-152 (GLA) each bind substrate. The active-site Acyl-thioester intermediate is the C168.

This sequence belongs to the LipB family.

Its subcellular location is the cytoplasm. It carries out the reaction octanoyl-[ACP] + L-lysyl-[protein] = N(6)-octanoyl-L-lysyl-[protein] + holo-[ACP] + H(+). It functions in the pathway protein modification; protein lipoylation via endogenous pathway; protein N(6)-(lipoyl)lysine from octanoyl-[acyl-carrier-protein]: step 1/2. Functionally, catalyzes the transfer of endogenously produced octanoic acid from octanoyl-acyl-carrier-protein onto the lipoyl domains of lipoate-dependent enzymes. Lipoyl-ACP can also act as a substrate although octanoyl-ACP is likely to be the physiological substrate. The sequence is that of Octanoyltransferase from Pseudomonas putida (strain W619).